Consider the following 333-residue polypeptide: NADH-ubiquinone oxidoreductase chain 2 (333 aa).

10 consecutive transmembrane segments (helical) span residues 10–30, 57–77, 91–111, 121–141, 143–163, 170–190, 192–212, 242–262, 267–287, and 313–333; these read WFIY…NIFI, LIYY…IIVY, FMVQ…FWMI, QIFL…VSMT, INSW…FYAN, KLLA…LELN, NMFI…ISFL, MYPI…MVSV, WILF…IIIL, and SYFA…LNFL.

This sequence belongs to the complex I subunit 2 family.

It localises to the mitochondrion inner membrane. It carries out the reaction a ubiquinone + NADH + 5 H(+)(in) = a ubiquinol + NAD(+) + 4 H(+)(out). In terms of biological role, core subunit of the mitochondrial membrane respiratory chain NADH dehydrogenase (Complex I) that is believed to belong to the minimal assembly required for catalysis. Complex I functions in the transfer of electrons from NADH to the respiratory chain. The immediate electron acceptor for the enzyme is believed to be ubiquinone. The chain is NADH-ubiquinone oxidoreductase chain 2 (ND2) from Apis mellifera ligustica (Common honeybee).